Reading from the N-terminus, the 204-residue chain is Large ribosomal subunit protein eL15 (204 aa).

Belongs to the eukaryotic ribosomal protein eL15 family. Component of the large ribosomal subunit.

Its subcellular location is the cytoplasm. In terms of biological role, component of the large ribosomal subunit. The ribosome is a large ribonucleoprotein complex responsible for the synthesis of proteins in the cell. This Silurus asotus (Amur catfish) protein is Large ribosomal subunit protein eL15 (rpl15).